The following is a 663-amino-acid chain: Telomere length regulator taz1 (663 aa).

The tract at residues 15–72 (ENEGDQQFDKEVVQNSDSNIETGQISDSLTKAVEERAETESSSNLSNFTTSESESSKP) is disordered. Composition is skewed to polar residues over residues 27–43 (VQNS…SDSL) and 54–67 (ESSS…TSES). Ser332 carries the post-translational modification Phosphoserine. 2 disordered regions span residues 389–412 (GSTA…TFSE) and 471–554 (RAKS…PYEG). Basic and acidic residues-rich tracts occupy residues 489–498 (KRGDNLRREA) and 512–524 (PPVR…ESRS). The Myb-like domain maps to 556-612 (RTRRKWTDEEENELYEMISQHGCCWSKIIHIQKLENGPLKTFGPTQIKDKARLIKAR).

Interacts with taf1 via the Myb domain, and ccq1.

The protein localises to the cytoplasm. It localises to the nucleus. The protein resides in the chromosome. It is found in the telomere. Functionally, regulates telomere length and function. Required for the repression of telomere-adjacent gene expression and for normal meiosis or sporulation. It may be a negative regulator of the telomere-replicating enzyme, telomerase, or may protect against activation of telomerase-independent pathways of telomere elongation. It may be involved in the interactions between chromosomes and spindle proteins, disruption of these interactions would lead to defective meiosis. The protein is Telomere length regulator taz1 (taz1) of Schizosaccharomyces pombe (strain 972 / ATCC 24843) (Fission yeast).